The following is a 196-amino-acid chain: ATP-dependent Clp protease proteolytic subunit (196 aa).

The active-site Nucleophile is the serine 96. The active site involves histidine 121.

The protein belongs to the peptidase S14 family. Fourteen ClpP subunits assemble into 2 heptameric rings which stack back to back to give a disk-like structure with a central cavity, resembling the structure of eukaryotic proteasomes.

It localises to the cytoplasm. The catalysed reaction is Hydrolysis of proteins to small peptides in the presence of ATP and magnesium. alpha-casein is the usual test substrate. In the absence of ATP, only oligopeptides shorter than five residues are hydrolyzed (such as succinyl-Leu-Tyr-|-NHMec, and Leu-Tyr-Leu-|-Tyr-Trp, in which cleavage of the -Tyr-|-Leu- and -Tyr-|-Trp bonds also occurs).. Cleaves peptides in various proteins in a process that requires ATP hydrolysis. Has a chymotrypsin-like activity. Plays a major role in the degradation of misfolded proteins. The chain is ATP-dependent Clp protease proteolytic subunit from Streptococcus agalactiae serotype III (strain NEM316).